A 353-amino-acid chain; its full sequence is Rhodopsin (353 aa).

Topologically, residues 1–36 are extracellular; sequence MNGTEGPYFYIPMVNTTGIVRSPYEYPQYYLVNPAA. N-linked (GlcNAc...) asparagine glycans are attached at residues asparagine 2 and asparagine 15. A helical membrane pass occupies residues 37-61; the sequence is YAALGAYMFLLILVGFPINFLTLYV. Over 62-73 the chain is Cytoplasmic; that stretch reads TIEHKKLRTPLN. Residues 74-96 traverse the membrane as a helical segment; it reads YILLNLAVANLFMVFGGFTTTMY. Topologically, residues 97 to 110 are extracellular; that stretch reads TSMHGYFVLGRLGC. Cysteine 110 and cysteine 187 form a disulfide bridge. The chain crosses the membrane as a helical span at residues 111–133; sequence NLEGFFATLGGEIALWSLVVLAI. The 'Ionic lock' involved in activated form stabilization signature appears at 134-136; the sequence is ERW. Over 134–152 the chain is Cytoplasmic; sequence ERWMVVCKPISNFRFGEDH. Residues 153 to 173 traverse the membrane as a helical segment; the sequence is AIMGLAFTWVMAAACAVPPLV. Topologically, residues 174 to 202 are extracellular; that stretch reads GWSRYIPEGMQCSCGIDYYTRAEGFNNES. Asparagine 200 carries N-linked (GlcNAc...) asparagine glycosylation. The helical transmembrane segment at 203-224 threads the bilayer; the sequence is FVIYMFVCHFLIPLVVVFFCYG. At 225-252 the chain is on the cytoplasmic side; that stretch reads RLLCAVKEAAAAQQESETTQRAEREVSR. The helical transmembrane segment at 253–274 threads the bilayer; sequence MVVIMVVAFLICWCPYAGVAWY. Topologically, residues 275–286 are extracellular; sequence IFTHQGSEFGPL. Residues 287–308 form a helical membrane-spanning segment; the sequence is FMTFPAFFAKSSSIYNPMIYIC. Lysine 296 bears the N6-(retinylidene)lysine mark. Residues 309 to 353 lie on the Cytoplasmic side of the membrane; the sequence is MNKQFRHCMITTLCCGKNPFEEEEGASTTSKTEASSVSSSSVSPA. 2 S-palmitoyl cysteine lipidation sites follow: cysteine 322 and cysteine 323. The segment at 330 to 353 is disordered; that stretch reads EEEGASTTSKTEASSVSSSSVSPA. Residues 334–353 show a composition bias toward low complexity; the sequence is ASTTSKTEASSVSSSSVSPA.

Belongs to the G-protein coupled receptor 1 family. Opsin subfamily. Phosphorylated on some or all of the serine and threonine residues present in the C-terminal region. In terms of processing, contains one covalently linked retinal chromophore.

The protein localises to the membrane. The protein resides in the cell projection. Its subcellular location is the cilium. It is found in the photoreceptor outer segment. Its function is as follows. Photoreceptor required for image-forming vision at low light intensity. While most salt water fish species use retinal as chromophore, most freshwater fish use 3-dehydroretinal, or a mixture of retinal and 3-dehydroretinal. Light-induced isomerization of 11-cis to all-trans retinal triggers a conformational change that activates signaling via G-proteins. Subsequent receptor phosphorylation mediates displacement of the bound G-protein alpha subunit by arrestin and terminates signaling. The chain is Rhodopsin (rho) from Chelon saliens (Leaping mullet).